A 76-amino-acid polypeptide reads, in one-letter code: Tabkunin 2 (76 aa).

The signal sequence occupies residues 1–20; that stretch reads MKVLSLIFVIFSVLVLFASA. A BPTI/Kunitz inhibitor domain is found at 25–75; the sequence is CDQPKAVGRCFAAFPKFYYNSSSGQCQAFIYGGCGGNENNFNTLEECNAKC. Cystine bridges form between Cys25–Cys75, Cys34–Cys58, and Cys50–Cys71.

As to expression, expressed in salivary glands.

The protein localises to the secreted. In terms of biological role, potent anticoagulant protein that inhibits the hydrolytic activities of all serine proteases tested (trypsin, thrombin, elastase, and chymotrypsin), with the highest efficacy on thrombin. The polypeptide is Tabkunin 2 (Tabanus yao (Horsefly)).